Consider the following 483-residue polypeptide: Glycogen synthase (483 aa).

Lys18 lines the ADP-alpha-D-glucose pocket.

The protein belongs to the glycosyltransferase 1 family. Bacterial/plant glycogen synthase subfamily.

The enzyme catalyses [(1-&gt;4)-alpha-D-glucosyl](n) + ADP-alpha-D-glucose = [(1-&gt;4)-alpha-D-glucosyl](n+1) + ADP + H(+). Its pathway is glycan biosynthesis; glycogen biosynthesis. In terms of biological role, synthesizes alpha-1,4-glucan chains using ADP-glucose. The chain is Glycogen synthase from Methylocella silvestris (strain DSM 15510 / CIP 108128 / LMG 27833 / NCIMB 13906 / BL2).